Here is a 527-residue protein sequence, read N- to C-terminus: Arginine--tRNA ligase (527 aa).

Positions 111–121 (ANPTGPLHIGH) match the 'HIGH' region motif.

The protein belongs to the class-I aminoacyl-tRNA synthetase family. In terms of assembly, monomer.

Its subcellular location is the cytoplasm. It carries out the reaction tRNA(Arg) + L-arginine + ATP = L-arginyl-tRNA(Arg) + AMP + diphosphate. The polypeptide is Arginine--tRNA ligase (Campylobacter concisus (strain 13826)).